The chain runs to 925 residues: Calpain-B (925 aa).

The Calpain catalytic domain occupies 259–558 (MFEDPDFPAT…FDRVEICNLS (300 aa)). Residues Cys314, His470, and Asn498 contribute to the active site. The domain III stretch occupies residues 559–728 (PDSLTEDQQH…TRNNMEENDD (170 aa)). A disordered region spans residues 723–753 (MEENDDEVGFGETDDRIAPSLPPPTPKEEDD). The tract at residues 729–748 (EVGFGETDDRIAPSLPPPTP) is linker. Residues 749-925 (KEEDDPQRIA…DDWLERTIYS (177 aa)) are domain IV. 2 consecutive EF-hand domains span residues 796–831 (FSKD…IAKW) and 826–861 (TDIA…AGYH). Ca(2+) contacts are provided by Asp809, Asp811, Ser813, Arg815, Glu820, Asp839, Thr843, Ser845, and His850.

It belongs to the peptidase C2 family. Undergoes calcium-dependent autolytic cleavage between Asn-74 and Ala-75 and between Gln-224 and Asn-225 to produce two major products, calpain B catalytic subunit 1 and calpain B catalytic subunit 2. This autolysis is necessary for activation of the protein. In terms of tissue distribution, strongly expressed in follicular and border cells of the oocyte. Ubiquitously expressed in early embryos. Localized to the trachea and their orifices, and to the larynx of late embryos. Restricted to the salivary gland in third instar larvae.

The protein resides in the cytoplasm. The protein localises to the membrane. Activated by millimolar concentrations of calcium. Functionally, calcium-regulated non-lysosomal thiol-protease. The polypeptide is Calpain-B (Drosophila melanogaster (Fruit fly)).